A 171-amino-acid chain; its full sequence is S-ribosylhomocysteine lyase (171 aa).

Fe cation is bound by residues His-54, His-58, and Cys-128.

The protein belongs to the LuxS family. Homodimer. The cofactor is Fe cation.

It catalyses the reaction S-(5-deoxy-D-ribos-5-yl)-L-homocysteine = (S)-4,5-dihydroxypentane-2,3-dione + L-homocysteine. In terms of biological role, involved in the synthesis of autoinducer 2 (AI-2) which is secreted by bacteria and is used to communicate both the cell density and the metabolic potential of the environment. The regulation of gene expression in response to changes in cell density is called quorum sensing. Catalyzes the transformation of S-ribosylhomocysteine (RHC) to homocysteine (HC) and 4,5-dihydroxy-2,3-pentadione (DPD). This chain is S-ribosylhomocysteine lyase, found in Yersinia enterocolitica serotype O:8 / biotype 1B (strain NCTC 13174 / 8081).